Reading from the N-terminus, the 331-residue chain is N-arachidonyl glycine receptor (331 aa).

Residues 1–26 (MITLNNQDQPVPFNNSYPDEYEIAAL) lie on the Extracellular side of the membrane. Asparagine 14 carries an N-linked (GlcNAc...) asparagine glycan. A helical membrane pass occupies residues 27–47 (VFYSCIFIIGLFVNITALWVF). The Cytoplasmic portion of the chain corresponds to 48-56 (SCTTKKRTT). A helical transmembrane segment spans residues 57–77 (VTIYMMNVALVDLIFIMTLPF). Topologically, residues 78–95 (RMFYYAKDEWPFGEYFCQ) are extracellular. An intrachain disulfide couples cysteine 94 to cysteine 172. Residues 96–116 (ILGALTVFYPSIALWLLAFIS) traverse the membrane as a helical segment. Over 117–138 (ADRYMAIVQPKYAKELKNTCKA) the chain is Cytoplasmic. The helical transmembrane segment at 139–159 (VLACVGVWIMTLTTTIPLLLL) threads the bilayer. At 160 to 191 (HKDPDKDSTPATCLKISDIVYLKAVNVLNFTR) the chain is on the extracellular side. Asparagine 188 is a glycosylation site (N-linked (GlcNAc...) asparagine). A helical membrane pass occupies residues 192–212 (LTFFFLIPLFIMIGCYLVIIH). Residues 213–232 (NLLHGRTSKLKPKVKEKSIR) lie on the Cytoplasmic side of the membrane. Residues 233–253 (IIITLLVQVLVCFMPFHICFA) form a helical membrane-spanning segment. The Extracellular portion of the chain corresponds to 254–268 (FLMLGTGENSYSPWG). Residues 269-289 (AFTTFLMNLSTCLDVILYYIV) form a helical membrane-spanning segment. Residues 290–331 (SKQFQARVISVMLYRNYLRGMRRKSFRSGSLRSLSNINSEML) are Cytoplasmic-facing. Phosphoserine is present on serine 322.

The protein belongs to the G-protein coupled receptor 1 family.

The protein resides in the cell membrane. It is found in the cytoplasmic vesicle membrane. G protein-coupled receptor (GPCR) that plays a role in diverse physiological processes particularly within the immune and nervous systems. Becomes active when triggered by various endogenous ligands including endocannabinoid N-arachidonyl glycine (NAGly), delta-9-tetrahydrocannabinol or resolvin D2/RvD2 derived from the omega-3 fatty acid docosahexaenoic acid (DHA). Upon RvD2 binding, facilitates the resolution of inflammation, aiding in tissue repair and homeostasis. Mechanistically, RvD2 ligation initiates Galphas protein coupling, activation of cAMP-PKA signaling pathway and phosphorylation of STAT3, leading to RvD2-stimulated macrophage phagocytosis. Mediates NAGly-induced process of reorganization of actin filaments and induction of acrosomal exocytosis. Activation by N-arachidonoyl glycine (NAGly) can also induce apoptosis in macrophages. Plays a role in homeostasis of CD8+ subsets of intraepithelial lymphocytes (IELs) (CD8alphaalpha and CD8alphabeta IELs) in small intestine by supporting preferential migration of CD8alphaalpha T-cells to intraepithelial compartment over lamina propria compartment, and by mediating their reconstitution into small intestine after bone marrow transplant. Participates also in hypotensive responses, mediating reduction in intraocular and blood pressure. The protein is N-arachidonyl glycine receptor of Macaca fascicularis (Crab-eating macaque).